The following is a 75-amino-acid chain: Large ribosomal subunit protein bL31 (75 aa).

Zn(2+)-binding residues include C16, C18, C37, and C40.

It belongs to the bacterial ribosomal protein bL31 family. Type A subfamily. Part of the 50S ribosomal subunit. Requires Zn(2+) as cofactor.

In terms of biological role, binds the 23S rRNA. The protein is Large ribosomal subunit protein bL31 of Legionella pneumophila (strain Paris).